The primary structure comprises 398 residues: Type III polyketide synthase pspB (398 aa).

CoA contacts are provided by residues Lys-47 and 47-54; that span reads KLLQINRS. Cys-152 acts as the Nucleophile in catalysis. Residue 214 to 215 coordinates substrate; the sequence is SD. Residues Leu-267, Gly-321, 321-324, and Ala-324 each bind CoA; that span reads GGEA.

The protein belongs to the thiolase-like superfamily. Chalcone/stilbene synthases family. In terms of assembly, homodimer.

It catalyses the reaction 11 malonyl-CoA + acetyl-CoA + S-adenosyl-L-methionine + 12 NADPH + 22 H(+) = soppiline B + S-adenosyl-L-homocysteine + 12 CO2 + 12 NADP(+) + 12 CoA + 8 H2O. It participates in secondary metabolite biosynthesis. Its function is as follows. Type III polyketide synthase; part of the gene cluster that mediates the biosynthesis of the alkylresorcinols called soppilines. The biosynthesis starts with the HR-PKS pspA-catalyzed carbon chain assembly through nine chain elongation cycles, using acetyl CoA and malonyl CoA as a starter and extender units, respectively, to produce the polyketide soppiline A. In the first round, the KR, DH, and CMeT domains work to produce 2-methyl-2-butenyl thioester. In rounds 2 to 5, the KR, DH, and ER domains fully catalyze the reduction of the elongated beta-ketothioester, resulting in the insertion of eight methylene units. The unusual Z,E,Z-triene motif is likely constructed during rounds 6 to 8. Typically, the DH domain introduces a double bond at an alpha,beta-position of an elongated polyketide chain, with the dehydration of a beta-hydroxy group. The last extension cycle would be carried out with L-oriented beta-ketoreduction by the KR domain to produce beta-hydroxy carboxylic acid soppiline A. The type III PKS pspB intercepts the elongated polyketide chain at round 8 from the HR-PKS pspA, followed by a tri-keto extension and decarboxylative aldol cyclization to produce 1,3,5-trisubstituted alkylresorcinol soppiline B. Subsequently, the cytochrome P450 monooxygenase pspC catalyzes three-step oxidations at the C-4 methyl group to carboxylic acid to yield soppiline C. The protein is Type III polyketide synthase pspB of Penicillium soppii.